The chain runs to 449 residues: MARNMAHILHILVISLSYSFLFVSSSSQDSQSLYHNSQPTSSKPNLLVLPVQEDASTGLHWANIHKRTPLMQVPLLLDLNGKHLWVTCSQHYSSSTYQAPFCHSTQCSRANTHQCFTCTDSTTTRPGCHNNTCGLLSSNPVTQESGLGELAQDVLAIHSTHGSKLGPMVKVPQFLFSCAPSFLAQKGLPNNVQGALGLGQAPISLQNQLFSHFGLKRQFSVCLSRYSTSNGAILFGDINDPNNNNYIHNSLDVLHDLVYTPLTISKQGEYFIQVNAIRVNKHLVIPTKNPFISPSSTSYHGSGEIGGALITTTHPYTVLSHSIFEVFTQVFANNMPKQAQVKAVGPFGLCYDSRKISGGAPSVDLILDKNDAVWRISSENFMVQAQDGVSCLGFVDGGVHARAGIALGAHHLEENLVVFDLERSRVGFNSNSLKSYGKTCSNLFDLNNP.

Residues methionine 1–leucine 33 form the signal peptide. In terms of domain architecture, Peptidase A1 spans histidine 60–asparagine 429. Intrachain disulfides connect cysteine 88–cysteine 178, cysteine 102–cysteine 115, cysteine 107–cysteine 133, cysteine 118–cysteine 128, and cysteine 350–cysteine 391. Asparagine 130 carries an N-linked (GlcNAc...) asparagine glycan.

The protein belongs to the peptidase A1 family. Two-subunit monomeric unit made of alpha and beta subunits coupled by disulfide bonds (at pH 4.5 and under non-reducing conditions). Can also form oligomers including dimer, tetramer and cyclic hexamer (trimer of dimers) (at pH &gt; 5.5). Component of globulins complexes which accumulate in seeds. Interacts with flavonoids (e.g. apigenin glucosides) present in globulins complexes. Forms a static complex with vitexin. In terms of processing, undergoes very complex post-translational maturation; the proteolytic processing leading to the formation of two alpha and beta subunits is incomplete, leaving a certain amount of the protein in an uncut form. Glycosylated on alpha chain. Expressed in developing cotyledons and in the embryonic axis of germinating seeds. Accumulates in seeds, especially in the protein bodies of developing cotyledonary cells (at protein level). Also detected, at low levels, in plumules and radicles.

The protein resides in the secreted. It is found in the extracellular space. Its function is as follows. Sulfur-rich seed storage protein that remains undegraded at germination. This chain is Gamma conglutin 1, found in Lupinus angustifolius (Narrow-leaved blue lupine).